The sequence spans 410 residues: Beta-arrestin-1 (410 aa).

Residues 1–163 are interaction with SRC; it reads MGDKGTRVFK…LEEKIHKRNS (163 aa). The interaction with CHRM2 stretch occupies residues 45–86; that stretch reads PEYLKERRVYVTLTCAFRYGREDLDVLGLTFRKDLFVANVQS. Tyr47 is subject to Phosphotyrosine. The 1D-myo-inositol hexakisphosphate site is built by Lys250, Met255, Lys324, and Lys326. The tract at residues 318–410 is interaction with TRAF6; that stretch reads IVSYKVKVKL…GTGSPQLNNR (93 aa). A [DE]-X(1,2)-F-X-X-[FL]-X-X-X-R motif motif is present at residues 385–395; sequence RQRLKGMKDDK. The interval 389-410 is disordered; sequence KGMKDDKEEEENGTGSPQLNNR. Residues 401 to 410 show a composition bias toward polar residues; the sequence is GTGSPQLNNR. Ser404 is subject to Phosphoserine; by GRK5.

The protein belongs to the arrestin family. In terms of assembly, monomer. Homodimer. Homooligomer; the self-association is mediated by InsP6-binding. Heterooligomer with ARRB2; the association is mediated by InsP6-binding. Interacts with ADRB2 (phosphorylated). Interacts with CHRM2 (phosphorylated). Interacts with LHCGR. Interacts with CYTH2 and CASR. Interacts with AP2B1 (dephosphorylated); phosphorylation of AP2B1 disrupts the interaction. Interacts (dephosphorylated at Ser-404) with CLTC. Interacts with CCR2 and GRK2. Interacts with CRR5. Interacts with PTAFR (phosphorylated on serine residues). Interacts with CLTC and MAP2K3. Interacts with CREB1. Interacts with TRAF6. Interacts with IGF1R and MDM2. Interacts with C5AR1. Interacts with PDE4D. Interacts with SRC (via the SH3 domain and the protein kinase domain); the interaction is independent of the phosphorylation state of SRC C-terminus. Interacts with TACR1. Interacts with RAF1. Interacts with CHUK, IKBKB and MAP3K14. Interacts with DVL1; the interaction is enhanced by phosphorylation of DVL1. Interacts with DVL2; the interaction is enhanced by phosphorylation of DVL2. Interacts with IGF1R. Associates with MAP kinase p38. Part of a MAPK signaling complex consisting of TACR1, ARRB1, SRC, MAPK1 (activated) and MAPK3 (activated). Part of a MAPK signaling complex consisting of F2RL1, ARRB1, RAF1, MAPK1 (activated) and MAPK3 (activated). Interacts with GPR143. Interacts with MAP2K4/MKK4. Interacts with HCK and CXCR1 (phosphorylated). Interacts with ACKR3 and ACKR4. Interacts with ARRDC1; the interaction is direct. Interacts with GPR61, GPR62 and GPR135. Post-translationally, constitutively phosphorylated at in the cytoplasm. At the plasma membrane, is rapidly dephosphorylated, a process that is required for clathrin binding and ADRB2 endocytosis but not for ADRB2 binding and desensitization. Once internalized, is rephosphorylated. In terms of processing, the ubiquitination status appears to regulate the formation and trafficking of beta-arrestin-GPCR complexes and signaling. Ubiquitination appears to occur GPCR-specific. Ubiquitinated by MDM2; the ubiquitination is required for rapid internalization of ADRB2. Deubiquitinated by USP33; the deubiquitination leads to a dissociation of the beta-arrestin-GPCR complex. Stimulation of a class A GPCR, such as ADRB2, induces transient ubiquitination and subsequently promotes association with USP33.

The protein resides in the cytoplasm. Its subcellular location is the nucleus. The protein localises to the cell membrane. It is found in the membrane. It localises to the clathrin-coated pit. The protein resides in the cell projection. Its subcellular location is the pseudopodium. The protein localises to the cytoplasmic vesicle. Functions in regulating agonist-mediated G-protein coupled receptor (GPCR) signaling by mediating both receptor desensitization and resensitization processes. During homologous desensitization, beta-arrestins bind to the GPRK-phosphorylated receptor and sterically preclude its coupling to the cognate G-protein; the binding appears to require additional receptor determinants exposed only in the active receptor conformation. The beta-arrestins target many receptors for internalization by acting as endocytic adapters (CLASPs, clathrin-associated sorting proteins) and recruiting the GPRCs to the adapter protein 2 complex 2 (AP-2) in clathrin-coated pits (CCPs). However, the extent of beta-arrestin involvement appears to vary significantly depending on the receptor, agonist and cell type. Internalized arrestin-receptor complexes traffic to intracellular endosomes, where they remain uncoupled from G-proteins. Two different modes of arrestin-mediated internalization occur. Class A receptors, like ADRB2, OPRM1, ENDRA, D1AR and ADRA1B dissociate from beta-arrestin at or near the plasma membrane and undergo rapid recycling. Class B receptors, like AVPR2, AGTR1, NTSR1, TRHR and TACR1 internalize as a complex with arrestin and traffic with it to endosomal vesicles, presumably as desensitized receptors, for extended periods of time. Receptor resensitization then requires that receptor-bound arrestin is removed so that the receptor can be dephosphorylated and returned to the plasma membrane. Involved in internalization of P2RY4 and UTP-stimulated internalization of P2RY2. Involved in phosphorylation-dependent internalization of OPRD1 ands subsequent recycling. Involved in the degradation of cAMP by recruiting cAMP phosphodiesterases to ligand-activated receptors. Beta-arrestins function as multivalent adapter proteins that can switch the GPCR from a G-protein signaling mode that transmits short-lived signals from the plasma membrane via small molecule second messengers and ion channels to a beta-arrestin signaling mode that transmits a distinct set of signals that are initiated as the receptor internalizes and transits the intracellular compartment. Acts as a signaling scaffold for MAPK pathways such as MAPK1/3 (ERK1/2). ERK1/2 activated by the beta-arrestin scaffold is largely excluded from the nucleus and confined to cytoplasmic locations such as endocytic vesicles, also called beta-arrestin signalosomes. Recruits c-Src/SRC to ADRB2 resulting in ERK activation. GPCRs for which the beta-arrestin-mediated signaling relies on both ARRB1 and ARRB2 (codependent regulation) include ADRB2, F2RL1 and PTH1R. For some GPCRs the beta-arrestin-mediated signaling relies on either ARRB1 or ARRB2 and is inhibited by the other respective beta-arrestin form (reciprocal regulation). Inhibits ERK1/2 signaling in AGTR1- and AVPR2-mediated activation (reciprocal regulation). Is required for SP-stimulated endocytosis of NK1R and recruits c-Src/SRC to internalized NK1R resulting in ERK1/2 activation, which is required for the antiapoptotic effects of SP. Is involved in proteinase-activated F2RL1-mediated ERK activity. Acts as a signaling scaffold for the AKT1 pathway. Is involved in alpha-thrombin-stimulated AKT1 signaling. Is involved in IGF1-stimulated AKT1 signaling leading to increased protection from apoptosis. Involved in activation of the p38 MAPK signaling pathway and in actin bundle formation. Involved in F2RL1-mediated cytoskeletal rearrangement and chemotaxis. Involved in AGTR1-mediated stress fiber formation by acting together with GNAQ to activate RHOA. Appears to function as signaling scaffold involved in regulation of MIP-1-beta-stimulated CCR5-dependent chemotaxis. Involved in attenuation of NF-kappa-B-dependent transcription in response to GPCR or cytokine stimulation by interacting with and stabilizing CHUK. May serve as nuclear messenger for GPCRs. Involved in OPRD1-stimulated transcriptional regulation by translocating to CDKN1B and FOS promoter regions and recruiting EP300 resulting in acetylation of histone H4. Involved in regulation of LEF1 transcriptional activity via interaction with DVL1 and/or DVL2 Also involved in regulation of receptors other than GPCRs. Involved in Toll-like receptor and IL-1 receptor signaling through the interaction with TRAF6 which prevents TRAF6 autoubiquitination and oligomerization required for activation of NF-kappa-B and JUN. Involved in IL8-mediated granule release in neutrophils. Binds phosphoinositides. Binds inositolhexakisphosphate (InsP6). Required for atypical chemokine receptor ACKR2-induced RAC1-LIMK1-PAK1-dependent phosphorylation of cofilin (CFL1) and for the up-regulation of ACKR2 from endosomal compartment to cell membrane, increasing its efficiency in chemokine uptake and degradation. Involved in the internalization of the atypical chemokine receptor ACKR3. Negatively regulates the NOTCH signaling pathway by mediating the ubiquitination and degradation of NOTCH1 by ITCH. Participates in the recruitment of the ubiquitin-protein ligase to the receptor. The chain is Beta-arrestin-1 (ARRB1) from Macaca fascicularis (Crab-eating macaque).